The sequence spans 277 residues: Outer plastidial membrane protein porin (277 aa).

The protein belongs to the eukaryotic mitochondrial porin (TC 1.B.8.1) family.

Its subcellular location is the plastid outer membrane. Forms a channel through the cell membrane that allows diffusion of small hydrophilic molecules. The channel adopts an open conformation at low or zero membrane potential and a closed conformation at potentials above 30-40 mV. The open state has a weak anion selectivity whereas the closed state is cation-selective. The sequence is that of Outer plastidial membrane protein porin (POR1) from Zea mays (Maize).